The primary structure comprises 243 residues: Proteasome subunit beta 1 (243 aa).

A compositionally biased stretch (polar residues) spans 1–14; that stretch reads MRAPQHNSDFSRTV. The tract at residues 1 to 34 is disordered; sequence MRAPQHNSDFSRTVDQLADDPNPYEPEIGSMPQN. Positions 1 to 48 are cleaved as a propeptide — removed in mature form; by autocatalysis; the sequence is MRAPQHNSDFSRTVDQLADDPNPYEPEIGSMPQNDLTRADLDNVNKTG. Thr-49 (nucleophile) is an active-site residue.

The protein belongs to the peptidase T1B family. In terms of assembly, the 20S proteasome core is composed of 14 alpha and 14 beta subunits that assemble into four stacked heptameric rings, resulting in a barrel-shaped structure. The two inner rings, each composed of seven catalytic beta subunits, are sandwiched by two outer rings, each composed of seven alpha subunits. The catalytic chamber with the active sites is on the inside of the barrel. Has a gated structure, the ends of the cylinder being occluded by the N-termini of the alpha-subunits. Is capped at one or both ends by the proteasome regulatory ATPase, PAN.

The protein resides in the cytoplasm. The enzyme catalyses Cleavage of peptide bonds with very broad specificity.. The formation of the proteasomal ATPase PAN-20S proteasome complex, via the docking of the C-termini of PAN into the intersubunit pockets in the alpha-rings, triggers opening of the gate for substrate entry. Interconversion between the open-gate and close-gate conformations leads to a dynamic regulation of the 20S proteasome proteolysis activity. Its function is as follows. Component of the proteasome core, a large protease complex with broad specificity involved in protein degradation. This Haloterrigena turkmenica (strain ATCC 51198 / DSM 5511 / JCM 9101 / NCIMB 13204 / VKM B-1734 / 4k) (Halococcus turkmenicus) protein is Proteasome subunit beta 1.